The sequence spans 552 residues: MVSKIDGKLFAEMIIQGAQNLSNHADLVDSLNVYPVPDGDTGTNMNLTMTSGREAVENNLSQQIGELGKTFSKGLLMGARGNSGVILSQLFRGFSKSLETYETINAKQFAESFKAGVDTAYKAIMKPVEGTILTVARDAADAAIQKAEETDDCIELMAYILEEAEVSLENTPNLLPVLKEVGVVDSGGKGLAIVYAGFLKALKGETISAQSPKLNKESLVNEEHDFHGVINTEDIVYGYCTEMMVRFGKNKKTFDEQNFREDMSQFGDSLLVINDEEIVKVHVHTEKPGDVFNYGQQYGELIKLKVENMREQHREVVKKEHDGGKAISTEETQAVDTAVIAISMGEGISEIFKSMGATHMISGGQTMNPSTEDIVKIIEQSQCKRAIILPNNKNILMASEQAAEIVEADTIVIPTKSIPQGIAALFNYDETDSLESNKSRMVESLEAVRSGSVTYAVRDTKIDGVEIKKDAFMGLIEDKIVTSHADQFETVKGLMAEMINEDSEIITMIVGMDADKTVTSDIEDWMEATYPDVELEQHDGQQPVYQYLFSVE.

A DhaL domain is found at 8–200; that stretch reads KLFAEMIIQG…LAIVYAGFLK (193 aa).

This is an uncharacterized protein from Staphylococcus saprophyticus subsp. saprophyticus (strain ATCC 15305 / DSM 20229 / NCIMB 8711 / NCTC 7292 / S-41).